The following is a 320-amino-acid chain: Formimidoylglutamase (320 aa).

Positions 125, 153, 155, 157, 244, and 246 each coordinate Mn(2+).

The protein belongs to the arginase family. Requires Mn(2+) as cofactor.

It catalyses the reaction N-formimidoyl-L-glutamate + H2O = formamide + L-glutamate. It participates in amino-acid degradation; L-histidine degradation into L-glutamate; L-glutamate from N-formimidoyl-L-glutamate (hydrolase route): step 1/1. Its function is as follows. Catalyzes the conversion of N-formimidoyl-L-glutamate to L-glutamate and formamide. The sequence is that of Formimidoylglutamase from Rhodococcus jostii (strain RHA1).